The sequence spans 239 residues: tRNA (guanine-N(1)-)-methyltransferase (239 aa).

Residues G109 and 133 to 138 each bind S-adenosyl-L-methionine; that span reads IGDYVL. 2 disordered regions span residues 163–187 and 217–239; these read PASR…YTRP and QRTR…DPGR. Composition is skewed to basic and acidic residues over residues 165 to 180 and 217 to 226; these read SRHD…RRLE and QRTRERRPEL.

This sequence belongs to the RNA methyltransferase TrmD family. In terms of assembly, homodimer.

The protein resides in the cytoplasm. It carries out the reaction guanosine(37) in tRNA + S-adenosyl-L-methionine = N(1)-methylguanosine(37) in tRNA + S-adenosyl-L-homocysteine + H(+). Specifically methylates guanosine-37 in various tRNAs. The protein is tRNA (guanine-N(1)-)-methyltransferase of Mycolicibacterium paratuberculosis (strain ATCC BAA-968 / K-10) (Mycobacterium paratuberculosis).